The primary structure comprises 66 residues: Large ribosomal subunit protein bL33c (66 aa).

It belongs to the bacterial ribosomal protein bL33 family.

It is found in the plastid. The protein localises to the chloroplast. The polypeptide is Large ribosomal subunit protein bL33c (Nasturtium officinale (Watercress)).